The following is a 228-amino-acid chain: Ribosomal RNA small subunit methyltransferase G (228 aa).

Residues glycine 89, leucine 94, 140-141 (VE), and arginine 159 each bind S-adenosyl-L-methionine.

It belongs to the methyltransferase superfamily. RNA methyltransferase RsmG family.

Its subcellular location is the cytoplasm. The catalysed reaction is guanosine(527) in 16S rRNA + S-adenosyl-L-methionine = N(7)-methylguanosine(527) in 16S rRNA + S-adenosyl-L-homocysteine. In terms of biological role, specifically methylates the N7 position of guanine in position 527 of 16S rRNA. This Burkholderia lata (strain ATCC 17760 / DSM 23089 / LMG 22485 / NCIMB 9086 / R18194 / 383) protein is Ribosomal RNA small subunit methyltransferase G.